Reading from the N-terminus, the 375-residue chain is Peptidyl-prolyl cis-trans isomerase D (375 aa).

Residues 7–169 form the PPIase cyclophilin-type domain; sequence YFDITIANEP…QAVTISSAGV (163 aa). TPR repeat units follow at residues 217 to 250, 270 to 307, and 312 to 345; these read AGKL…LDVH, LPLL…PNLS, and GKAL…VPGD.

It belongs to the cyclophilin-type PPIase family. PPIase D subfamily.

It localises to the cytoplasm. The enzyme catalyses [protein]-peptidylproline (omega=180) = [protein]-peptidylproline (omega=0). Its function is as follows. PPIases accelerate the folding of proteins. It catalyzes the cis-trans isomerization of proline imidic peptide bonds in oligopeptides. The sequence is that of Peptidyl-prolyl cis-trans isomerase D (CPR6) from Cryptococcus neoformans var. neoformans serotype D (strain JEC21 / ATCC MYA-565) (Filobasidiella neoformans).